A 377-amino-acid chain; its full sequence is 4-hydroxy-3-methylbut-2-en-1-yl diphosphate synthase (flavodoxin) (377 aa).

Positions 270, 273, 305, and 312 each coordinate [4Fe-4S] cluster.

Belongs to the IspG family. The cofactor is [4Fe-4S] cluster.

It catalyses the reaction (2E)-4-hydroxy-3-methylbut-2-enyl diphosphate + oxidized [flavodoxin] + H2O + 2 H(+) = 2-C-methyl-D-erythritol 2,4-cyclic diphosphate + reduced [flavodoxin]. Its pathway is isoprenoid biosynthesis; isopentenyl diphosphate biosynthesis via DXP pathway; isopentenyl diphosphate from 1-deoxy-D-xylulose 5-phosphate: step 5/6. Converts 2C-methyl-D-erythritol 2,4-cyclodiphosphate (ME-2,4cPP) into 1-hydroxy-2-methyl-2-(E)-butenyl 4-diphosphate. This Bacillus subtilis (strain 168) protein is 4-hydroxy-3-methylbut-2-en-1-yl diphosphate synthase (flavodoxin).